The following is an 80-amino-acid chain: Protein UL148B (80 aa).

A helical membrane pass occupies residues 10 to 30 (AICVGLVMGVTVIASCALLVF).

The protein resides in the host membrane. The chain is Protein UL148B (UL148B) from Homo sapiens (Human).